The primary structure comprises 430 residues: Enolase (430 aa).

Glutamine 166 lines the (2R)-2-phosphoglycerate pocket. The active-site Proton donor is glutamate 208. Mg(2+) contacts are provided by aspartate 245, glutamate 288, and aspartate 315. Positions 340, 369, 370, and 391 each coordinate (2R)-2-phosphoglycerate. The active-site Proton acceptor is the lysine 340.

The protein belongs to the enolase family. Mg(2+) serves as cofactor.

The protein localises to the cytoplasm. It localises to the secreted. The protein resides in the cell surface. It carries out the reaction (2R)-2-phosphoglycerate = phosphoenolpyruvate + H2O. It functions in the pathway carbohydrate degradation; glycolysis; pyruvate from D-glyceraldehyde 3-phosphate: step 4/5. Its function is as follows. Catalyzes the reversible conversion of 2-phosphoglycerate (2-PG) into phosphoenolpyruvate (PEP). It is essential for the degradation of carbohydrates via glycolysis. The sequence is that of Enolase from Clostridium kluyveri (strain NBRC 12016).